Here is a 400-residue protein sequence, read N- to C-terminus: Tyrosine--tRNA ligase (400 aa).

Residues 42-51 (PTAPDLHLGH) carry the 'HIGH' region motif. A 'KMSKS' region motif is present at residues 226–230 (KMSKS). Lys-229 is a binding site for ATP. Residues 339-399 (FSISYILRRA…GKKKIAQIFV (61 aa)) form the S4 RNA-binding domain.

The protein belongs to the class-I aminoacyl-tRNA synthetase family. TyrS type 2 subfamily. As to quaternary structure, homodimer.

The protein localises to the cytoplasm. The enzyme catalyses tRNA(Tyr) + L-tyrosine + ATP = L-tyrosyl-tRNA(Tyr) + AMP + diphosphate + H(+). Its function is as follows. Catalyzes the attachment of tyrosine to tRNA(Tyr) in a two-step reaction: tyrosine is first activated by ATP to form Tyr-AMP and then transferred to the acceptor end of tRNA(Tyr). In Hahella chejuensis (strain KCTC 2396), this protein is Tyrosine--tRNA ligase.